The chain runs to 422 residues: L-cysteine:1D-myo-inositol 2-amino-2-deoxy-alpha-D-glucopyranoside ligase (422 aa).

Residues 1–34 (MKSWSTPAPPTVPSRPDRLRLHDTATGRTRHPGN) are disordered. Over residues 15–25 (RPDRLRLHDTA) the composition is skewed to basic and acidic residues. Cysteine 44 is a binding site for Zn(2+). L-cysteinyl-5'-AMP-binding positions include 44–47 (CGIT), threonine 59, and 82–84 (NVT). The 'HIGH' region signature appears at 46 to 56 (ITPYDATHLGH). A 'ERGGDP' region motif is present at residues 196-201 (ERGGDP). Tryptophan 237 contacts L-cysteinyl-5'-AMP. Cysteine 241 contacts Zn(2+). Residue 259–261 (GSD) coordinates L-cysteinyl-5'-AMP. Histidine 266 is a binding site for Zn(2+). Valine 292 provides a ligand contact to L-cysteinyl-5'-AMP. The 'KMSKS' region signature appears at 298 to 302 (KMSKS).

It belongs to the class-I aminoacyl-tRNA synthetase family. MshC subfamily. As to quaternary structure, monomer. The cofactor is Zn(2+).

The catalysed reaction is 1D-myo-inositol 2-amino-2-deoxy-alpha-D-glucopyranoside + L-cysteine + ATP = 1D-myo-inositol 2-(L-cysteinylamino)-2-deoxy-alpha-D-glucopyranoside + AMP + diphosphate + H(+). Functionally, catalyzes the ATP-dependent condensation of GlcN-Ins and L-cysteine to form L-Cys-GlcN-Ins. The polypeptide is L-cysteine:1D-myo-inositol 2-amino-2-deoxy-alpha-D-glucopyranoside ligase (Micrococcus luteus (strain ATCC 4698 / DSM 20030 / JCM 1464 / CCM 169 / CCUG 5858 / IAM 1056 / NBRC 3333 / NCIMB 9278 / NCTC 2665 / VKM Ac-2230) (Micrococcus lysodeikticus)).